Here is a 294-residue protein sequence, read N- to C-terminus: Acetyl-coenzyme A carboxylase carboxyl transferase subunit beta (294 aa).

The CoA carboxyltransferase N-terminal domain maps to 27–294 (LWHKCPSCDA…PSPVALPVTA (268 aa)). 4 residues coordinate Zn(2+): Cys31, Cys34, Cys50, and Cys53. Residues 31-53 (CPSCDAVLYRPELEKTLDVCPKC) form a C4-type zinc finger.

The protein belongs to the AccD/PCCB family. Acetyl-CoA carboxylase is a heterohexamer composed of biotin carboxyl carrier protein (AccB), biotin carboxylase (AccC) and two subunits each of ACCase subunit alpha (AccA) and ACCase subunit beta (AccD). Requires Zn(2+) as cofactor.

It localises to the cytoplasm. It carries out the reaction N(6)-carboxybiotinyl-L-lysyl-[protein] + acetyl-CoA = N(6)-biotinyl-L-lysyl-[protein] + malonyl-CoA. Its pathway is lipid metabolism; malonyl-CoA biosynthesis; malonyl-CoA from acetyl-CoA: step 1/1. In terms of biological role, component of the acetyl coenzyme A carboxylase (ACC) complex. Biotin carboxylase (BC) catalyzes the carboxylation of biotin on its carrier protein (BCCP) and then the CO(2) group is transferred by the transcarboxylase to acetyl-CoA to form malonyl-CoA. In Ectopseudomonas mendocina (strain ymp) (Pseudomonas mendocina), this protein is Acetyl-coenzyme A carboxylase carboxyl transferase subunit beta.